The following is a 148-amino-acid chain: 3-dehydroquinate dehydratase (148 aa).

Y23 serves as the catalytic Proton acceptor. The substrate site is built by N75, H81, and D88. The Proton donor role is filled by H101. Substrate-binding positions include 102–103 (LS) and R112.

Belongs to the type-II 3-dehydroquinase family. Homododecamer.

It carries out the reaction 3-dehydroquinate = 3-dehydroshikimate + H2O. It participates in metabolic intermediate biosynthesis; chorismate biosynthesis; chorismate from D-erythrose 4-phosphate and phosphoenolpyruvate: step 3/7. Catalyzes a trans-dehydration via an enolate intermediate. In Xanthomonas axonopodis pv. citri (strain 306), this protein is 3-dehydroquinate dehydratase.